Consider the following 371-residue polypeptide: NDMA-dependent alcohol dehydrogenase (371 aa).

Zn(2+) is bound by residues Cys40, His61, Cys91, Cys94, Cys97, Cys105, and Cys167.

It belongs to the zinc-containing alcohol dehydrogenase family. In terms of assembly, homotrimer. NADH is required as a cofactor.

It catalyses the reaction N,N-dimethyl-4-nitrosoaniline + a primary alcohol = 4-(hydroxylamino)-N,N-dimethylaniline + an aldehyde. It carries out the reaction ethanol + A = acetaldehyde + AH2. With respect to regulation, inhibited by trans-4-(N,N-dimethylamino)-cinnamaldehyde through direct binding to the catalytic zinc ion in a substrate-like geometry. Isobutyramide acts as a competitive inhibitor with respect to the electron acceptor NDMA. Acetaldehyde, AMP, ADP, ATP, as well as CuSO(4), FeSO(4), HgCl(2), NiCl(2), ZnSO(4), KCN, and NaN(3) are additional inhibitors of the catalytic activity. Catalytically different from common alcohol dehydrogenases. Effective in oxidizing ethanol, other primary alcohols and benzylalcohol only in the presence of p-nitroso-N,N-dimethylaniline (NDMA) as an electron acceptor. NADH acts as a cofactor here instead as a coenzyme. This is NDMA-dependent alcohol dehydrogenase from Amycolatopsis methanolica.